The sequence spans 380 residues: Proline iminopeptidase (380 aa).

The region spanning Pro-98 to Asn-360 is the AB hydrolase-1 domain. Ser-172 acts as the Nucleophile in catalysis. Asp-329 is an active-site residue. His-357 serves as the catalytic Proton donor.

It belongs to the peptidase S33 family.

The protein localises to the cytoplasm. It carries out the reaction Release of N-terminal proline from a peptide.. Specifically catalyzes the removal of N-terminal proline residues from peptides. The polypeptide is Proline iminopeptidase (PIP) (Arabidopsis thaliana (Mouse-ear cress)).